The chain runs to 314 residues: Transcription factor TCP20 (314 aa).

2 disordered regions span residues 1-91 and 295-314; these read MDPK…RGRR and NHEE…GSGR. Composition is skewed to basic and acidic residues over residues 38 to 49 and 77 to 89; these read DENRKPTTEIKD and SNKD…EGRG. The 55-residue stretch at 78–132 folds into the TCP domain; the sequence is NKDRHTKVEGRGRRIRMPALCAARIFQLTRELGHKSDGETIQWLLQQAEPSIIAA.

As to quaternary structure, interacts with PURA1. Interacts with SPL.

The protein localises to the nucleus. In terms of biological role, transcription factor that binds to the site II motif (3'-TGGGCC/T-5') in the promoter of PCNA-2 and to 3'-GCCCG/A-5' elements in the promoters of cyclin CYCB1-1 and ribosomal protein genes. The polypeptide is Transcription factor TCP20 (TCP20) (Arabidopsis thaliana (Mouse-ear cress)).